The sequence spans 693 residues: Sodium-dependent phosphate transport protein 2B (693 aa).

The interval 1–46 (MAPWPELENSQPTSEKYTVKADGEQSAKPEKAKETEKDDTGTPITK) is disordered. At 1 to 89 (MAPWPELENS…KWSERDTKGK (89 aa)) the chain is on the cytoplasmic side. Positions 17–40 (YTVKADGEQSAKPEKAKETEKDDT) are enriched in basic and acidic residues. Residues 90 to 110 (ILCVFQGIGKFILLLVFLYFF) form a helical membrane-spanning segment. The Extracellular segment spans residues 111-135 (VCSLDVLSSAFQLVGGKVAGKFFNN). The helical transmembrane segment at 136 to 156 (NSIMSNPLAGMVIGVLVTVLV) threads the bilayer. At 157-212 (QSSSTSTSIVVSMVASSLLPVHAAIPIIMGANIGTSITNTIVALMQAGDRKEFRRA) the chain is on the cytoplasmic side. A helical membrane pass occupies residues 213–233 (FAGATVHDFFNWLSVLVLLPL). The Extracellular portion of the chain corresponds to 234–361 (EAATGYLERL…IFVNFNLSDA (128 aa)). A disulfide bridge connects residues Cys302 and Cys349. 2 N-linked (GlcNAc...) asparagine glycosylation sites follow: Asn307 and Asn320. A helical membrane pass occupies residues 362 to 382 (IVGTILLITSLLILCTCLILI). At 383 to 408 (VKLLGSVLRGQVAAVIKKTINTDFPY) the chain is on the cytoplasmic side. The helical transmembrane segment at 409-429 (PFSWVTGYLAILVGAGMTFIV) threads the bilayer. At 430–485 (QSSSVFTSAMTPLIGIGVISIQRAYPLTLGANIGTTTTAILAALASPGSTLKSSLQ) the chain is on the extracellular side. Residues 486–506 (IALCHFFFNISGIILWYPIPF) form a helical membrane-spanning segment. Over 507 to 525 (TRLPIRLAKGLGNISSKYR) the chain is Cytoplasmic. The chain crosses the membrane as a helical span at residues 526–546 (WFAIVYLIVFFLLIPLAVFGL). The Extracellular portion of the chain corresponds to 547–550 (SLIG). Residues 551-571 (WPVLVGVASPIVLVILLVVVL) traverse the membrane as a helical segment. At 572–693 (KILQSFCPGS…TKIVSSVTAL (122 aa)) the chain is on the cytoplasmic side.

This sequence belongs to the SLC34A transporter family. Glycosylated.

The protein localises to the apical cell membrane. The catalysed reaction is 3 Na(+)(out) + phosphate(out) = 3 Na(+)(in) + phosphate(in). In terms of biological role, involved in actively transporting phosphate into cells via Na(+) cotransport. In Bos taurus (Bovine), this protein is Sodium-dependent phosphate transport protein 2B (SLC34A2).